Reading from the N-terminus, the 263-residue chain is Purine nucleoside phosphorylase SAV1187 (263 aa).

H79, C124, and H141 together coordinate Zn(2+).

Belongs to the purine nucleoside phosphorylase YfiH/LACC1 family. As to quaternary structure, homodimer. The cofactor is Cu(2+). Requires Zn(2+) as cofactor.

The catalysed reaction is adenosine + phosphate = alpha-D-ribose 1-phosphate + adenine. It catalyses the reaction S-methyl-5'-thioadenosine + phosphate = 5-(methylsulfanyl)-alpha-D-ribose 1-phosphate + adenine. It carries out the reaction inosine + phosphate = alpha-D-ribose 1-phosphate + hypoxanthine. The enzyme catalyses adenosine + H2O + H(+) = inosine + NH4(+). Purine nucleoside enzyme that catalyzes the phosphorolysis of adenosine and inosine nucleosides, yielding D-ribose 1-phosphate and the respective free bases, adenine and hypoxanthine. Also catalyzes the phosphorolysis of S-methyl-5'-thioadenosine into adenine and S-methyl-5-thio-alpha-D-ribose 1-phosphate. Also has adenosine deaminase activity. This chain is Purine nucleoside phosphorylase SAV1187, found in Staphylococcus aureus (strain Mu50 / ATCC 700699).